A 416-amino-acid chain; its full sequence is E3 ubiquitin-protein ligase RNFT1 (416 aa).

2 disordered regions span residues 1–50 and 68–117; these read MKHR…MSLP and DLSS…DSRE. The segment covering 7–19 has biased composition (basic and acidic residues); that stretch reads HERQSSTESKNLK. Composition is skewed to polar residues over residues 20–45 and 68–80; these read ETTQ…SPSA and DLSS…VARS. The span at 81-100 shows a compositional bias: basic residues; the sequence is NSRRVRPSTHGRSPSRHGHT. The next 6 helical transmembrane spans lie at 146–166, 184–204, 214–234, 237–257, 265–287, and 302–322; these read LVVQ…TFLY, LQCL…YYTF, VFMN…VVGI, FIGK…PSFV, YWYM…PVWF, and WHFG…IIFG. The interval 349-400 is required for ubiquitin ligase activity and for protection against ER stress-induced cell death; that stretch reads CSEADGMCAICQAEFTKPIALICQHVFCEECISSWFNKEKTCPLCRTLISNH. An RING-type zinc finger spans residues 356 to 394; the sequence is CAICQAEFTKPIALICQHVFCEECISSWFNKEKTCPLCR.

The protein localises to the endoplasmic reticulum membrane. The enzyme catalyses S-ubiquitinyl-[E2 ubiquitin-conjugating enzyme]-L-cysteine + [acceptor protein]-L-lysine = [E2 ubiquitin-conjugating enzyme]-L-cysteine + N(6)-ubiquitinyl-[acceptor protein]-L-lysine.. Its pathway is protein modification; protein ubiquitination. Its function is as follows. E3 ubiquitin-protein ligase that acts in the endoplasmic reticulum (ER)-associated degradation (ERAD) pathway, which targets misfolded proteins that accumulate in the endoplasmic reticulum (ER) for ubiquitination and subsequent proteasome-mediated degradation. Protects cells from ER stress-induced apoptosis. The chain is E3 ubiquitin-protein ligase RNFT1 (rnft1) from Xenopus laevis (African clawed frog).